The chain runs to 447 residues: Tubulin beta chain (447 aa).

Q11, E69, S138, G142, T143, G144, N204, and N226 together coordinate GTP. Residue E69 coordinates Mg(2+). Positions 424–447 are disordered; that stretch reads QYQEASVSEGEEEYDEEAPLEGEE. Residues 432–447 show a composition bias toward acidic residues; sequence EGEEEYDEEAPLEGEE.

It belongs to the tubulin family. As to quaternary structure, dimer of alpha and beta chains. A typical microtubule is a hollow water-filled tube with an outer diameter of 25 nm and an inner diameter of 15 nM. Alpha-beta heterodimers associate head-to-tail to form protofilaments running lengthwise along the microtubule wall with the beta-tubulin subunit facing the microtubule plus end conferring a structural polarity. Microtubules usually have 13 protofilaments but different protofilament numbers can be found in some organisms and specialized cells. Mg(2+) serves as cofactor.

It localises to the cytoplasm. It is found in the cytoskeleton. Tubulin is the major constituent of microtubules, a cylinder consisting of laterally associated linear protofilaments composed of alpha- and beta-tubulin heterodimers. Microtubules grow by the addition of GTP-tubulin dimers to the microtubule end, where a stabilizing cap forms. Below the cap, tubulin dimers are in GDP-bound state, owing to GTPase activity of alpha-tubulin. The protein is Tubulin beta chain of Venturia inaequalis (Apple scab fungus).